We begin with the raw amino-acid sequence, 450 residues long: Probable glycine dehydrogenase (decarboxylating) subunit 1 (450 aa).

It belongs to the GcvP family. N-terminal subunit subfamily. In terms of assembly, the glycine cleavage system is composed of four proteins: P, T, L and H. In this organism, the P 'protein' is a heterodimer of two subunits.

It catalyses the reaction N(6)-[(R)-lipoyl]-L-lysyl-[glycine-cleavage complex H protein] + glycine + H(+) = N(6)-[(R)-S(8)-aminomethyldihydrolipoyl]-L-lysyl-[glycine-cleavage complex H protein] + CO2. Its function is as follows. The glycine cleavage system catalyzes the degradation of glycine. The P protein binds the alpha-amino group of glycine through its pyridoxal phosphate cofactor; CO(2) is released and the remaining methylamine moiety is then transferred to the lipoamide cofactor of the H protein. This chain is Probable glycine dehydrogenase (decarboxylating) subunit 1, found in Desulfotalea psychrophila (strain LSv54 / DSM 12343).